Here is a 136-residue protein sequence, read N- to C-terminus: MQGARSAAAMAAAAADEEREVRRAVEEKPVVVVGRRGCCMAHVARRLLLGQGANPAVLEVGDDADPAALVDAALQARRRKDGGDKAAAGDGGGGAAVAFPAVFIGGRLVGGLDRLMAMHMAGELVPVLKQAGALWL.

Residues Glu18–Trp135 enclose the Glutaredoxin domain. Cys38 contributes to the [2Fe-2S] cluster binding site. Residues Ala133 to Leu136 carry the Responsive for interaction with TGA factors motif.

It belongs to the glutaredoxin family. CC-type subfamily.

It is found in the cytoplasm. It localises to the nucleus. Its function is as follows. May only reduce GSH-thiol disulfides, but not protein disulfides. In Oryza sativa subsp. japonica (Rice), this protein is Monothiol glutaredoxin-S3 (GRXS3).